The chain runs to 680 residues: Tumor protein 63 (680 aa).

The tract at residues 1–107 (MNFETSRCAT…MQDSDLSDPM (107 aa)) is transcription activation. Polar residues predominate over residues 123–157 (QIQNGSSSTSPYNTDHAQNSVTAPSPYAQPSSTFD). The segment at 123 to 171 (QIQNGSSSTSPYNTDHAQNSVTAPSPYAQPSSTFDALSPSPAIPSNTDY) is disordered. Residues 170–362 (DYPGPHSFDV…KADEDSIRKQ (193 aa)) mediate DNA binding. Positions 244, 247, 308, and 312 each coordinate Zn(2+). Over residues 351–360 (DRKADEDSIR) the composition is skewed to basic and acidic residues. Disordered stretches follow at residues 351 to 393 (DRKA…IKKR) and 435 to 472 (YRQQQQQQHQHLLQKQTSIQSPSSYGNSSPPLNKMNSM). The segment at 352 to 388 (RKADEDSIRKQQVSDSTKNGDGTKRPFRQNTHGIQMT) is interaction with HIPK2. Polar residues-rich tracts occupy residues 361 to 371 (KQQVSDSTKNG) and 379 to 389 (RQNTHGIQMTS). Positions 394 to 443 (RSPDDELLYLPVRGRETYEMLLKIKESLELMQYLPQHTIETYRQQQQQQH) are oligomerization. The span at 437–450 (QQQQQQHQHLLQKQ) shows a compositional bias: low complexity. Over residues 451–472 (TSIQSPSSYGNSSPPLNKMNSM) the composition is skewed to polar residues. Residues 541–607 (PPYPTDCSIV…WKGILDHRQL (67 aa)) enclose the SAM domain. The tract at residues 610-680 (FSSPSHLLRT…KQQRIKEEGE (71 aa)) is transactivation inhibition. Lys-676 participates in a covalent cross-link: Glycyl lysine isopeptide (Lys-Gly) (interchain with G-Cter in SUMO).

It belongs to the p53 family. In terms of assembly, binds DNA as a homotetramer. Isoform composition of the tetramer may determine transactivation activity. Isoforms Alpha and Gamma interact with HIPK2. Interacts with SSRP1, leading to stimulate coactivator activity. Isoform 1 and isoform 2 interact with WWP1. Interacts with PDS5A. Isoform 5 (via activation domain) interacts with NOC2L. It depends on Zn(2+) as a cofactor. Post-translationally, may be sumoylated. Ubiquitinated. Polyubiquitination involves WWP1 and leads to proteasomal degradation of this protein. As to expression, widely expressed, notably in heart, kidney, placenta, prostate, skeletal muscle, testis and thymus, although the precise isoform varies according to tissue type. Progenitor cell layers of skin, breast, eye and prostate express high levels of DeltaN-type isoforms. Isoform 10 is predominantly expressed in skin squamous cell carcinomas, but not in normal skin tissues.

It localises to the nucleus. Functionally, acts as a sequence specific DNA binding transcriptional activator or repressor. The isoforms contain a varying set of transactivation and auto-regulating transactivation inhibiting domains thus showing an isoform specific activity. Isoform 2 activates RIPK4 transcription. May be required in conjunction with TP73/p73 for initiation of p53/TP53 dependent apoptosis in response to genotoxic insults and the presence of activated oncogenes. Involved in Notch signaling by probably inducing JAG1 and JAG2. Plays a role in the regulation of epithelial morphogenesis. The ratio of DeltaN-type and TA*-type isoforms may govern the maintenance of epithelial stem cell compartments and regulate the initiation of epithelial stratification from the undifferentiated embryonal ectoderm. Required for limb formation from the apical ectodermal ridge. Activates transcription of the p21 promoter. The protein is Tumor protein 63 (TP63) of Homo sapiens (Human).